We begin with the raw amino-acid sequence, 160 residues long: Transcriptional repressor NrdR (160 aa).

The segment covering 1–11 (MRCPSCNSLDT) has biased composition (polar residues). Residues 1–20 (MRCPSCNSLDTQVKDSRPTE) form a disordered region. A zinc finger spans residues 3–34 (CPSCNSLDTQVKDSRPTEDSAVIRRRRVCMAC). The 91-residue stretch at 49–139 (LTVIKRNGRR…VYRNFREAKD (91 aa)) folds into the ATP-cone domain.

This sequence belongs to the NrdR family. Zn(2+) serves as cofactor.

Its function is as follows. Negatively regulates transcription of bacterial ribonucleotide reductase nrd genes and operons by binding to NrdR-boxes. This Nitrobacter winogradskyi (strain ATCC 25391 / DSM 10237 / CIP 104748 / NCIMB 11846 / Nb-255) protein is Transcriptional repressor NrdR.